Consider the following 253-residue polypeptide: DNA repair protein RecO (253 aa).

Belongs to the RecO family.

Its function is as follows. Involved in DNA repair and RecF pathway recombination. In Dehalococcoides mccartyi (strain ATCC BAA-2266 / KCTC 15142 / 195) (Dehalococcoides ethenogenes (strain 195)), this protein is DNA repair protein RecO.